The chain runs to 586 residues: Kelch-like protein 7 (586 aa).

The BTB domain maps to 44 to 111 (CDVILTVQER…AYTARISVNS (68 aa)). A BACK domain is found at 146 to 248 (CLGISVLAEC…SKNFLSKTVQ (103 aa)). Kelch repeat units lie at residues 294–336 (RIAL…FWDN), 337–382 (VVYI…AAEG), 383–430 (KIYT…EANG), 431–481 (LIYV…FVKD), 483–528 (IFAV…AVGS), and 530–575 (IYVL…CVVD).

In terms of assembly, homodimer. Component of the BCR(KLHL7) E3 ubiquitin ligase complex, at least composed of CUL3 and KLHL7 and RBX1.

The protein localises to the nucleus. It localises to the cytoplasm. Its pathway is protein modification; protein ubiquitination. Its function is as follows. Substrate-specific adapter of a BCR (BTB-CUL3-RBX1) E3 ubiquitin ligase complex. The BCR(KLHL7) complex acts by mediating ubiquitination and subsequent degradation of substrate proteins. Probably mediates 'Lys-48'-linked ubiquitination. In Mus musculus (Mouse), this protein is Kelch-like protein 7 (Klhl7).